A 99-amino-acid polypeptide reads, in one-letter code: Nucleoid-associated protein SPN23F10240 (99 aa).

This sequence belongs to the YbaB/EbfC family. Homodimer.

The protein localises to the cytoplasm. Its subcellular location is the nucleoid. Its function is as follows. Binds to DNA and alters its conformation. May be involved in regulation of gene expression, nucleoid organization and DNA protection. This chain is Nucleoid-associated protein SPN23F10240, found in Streptococcus pneumoniae (strain ATCC 700669 / Spain 23F-1).